Reading from the N-terminus, the 221-residue chain is NIP3 homolog (221 aa).

The segment at glycine 24–proline 55 is disordered. Lysine 26 is covalently cross-linked (Glycyl lysine isopeptide (Lys-Gly) (interchain with G-Cter in ubiquitin)). Positions glutamine 32–alanine 49 are enriched in low complexity. Residues valine 189–phenylalanine 209 traverse the membrane as a helical segment. The required for initiation of apoptosis stretch occupies residues valine 189–phenylalanine 209.

Belongs to the NIP3 family. As to quaternary structure, homodimer; via transmembrane domain. Interacts with ced-3 and ced-9. Ubiquitinated and degraded by the proteasome. Under oxidative stress conditions, ubiquitinated at Lys-26 in a pink-1 dependent manner. Colocalizes with pdr-1 and may be ubiquitinated by it. Expressed in all somatic tissues including neurons, pharynx, intestine, body wall muscles and vulva muscles.

The protein resides in the mitochondrion outer membrane. Its function is as follows. Initiates apoptosis in a BH3-independent mechanism possibly by recruiting ced-3 to mitochondria and other cytoplasmic membranes. Has a role in lifespan and tumor growth. Required for the induction of mitophagy under stress conditions. The sequence is that of NIP3 homolog from Caenorhabditis elegans.